A 25-amino-acid polypeptide reads, in one-letter code: Toxin Tpa3 (25 aa).

Belongs to the non-disulfide-bridged peptide (NDBP) superfamily. In terms of tissue distribution, expressed by the venom gland.

The protein resides in the secreted. Its function is as follows. Unknown. Is not toxic to mammals. The sequence is that of Toxin Tpa3 from Tityus pachyurus (Colombian scorpion).